We begin with the raw amino-acid sequence, 923 residues long: Rap guanine nucleotide exchange factor 3 (923 aa).

A Phosphoserine modification is found at Ser-79. The DEP domain maps to 110–186 (ATCPNLIRDR…RDAQFYRFPG (77 aa)). Residues 218–242 (TVALRKPPGQRTDEELDLIFEELLH) form an interaction with PDE3B region. 3',5'-cyclic AMP-binding positions include 311 to 314 (GQLA) and 321 to 322 (RA). In terms of domain architecture, N-terminal Ras-GEF spans 384–518 (NRYTVMSGTP…EQWPERRRCH (135 aa)). Positions 398-422 (ELLLEAMGPDSSAHDPTETFLSDFL) are interaction with PDE3B. A phosphoserine mark is found at Ser-528 and Ser-864. One can recognise a Ras-GEF domain in the interval 662-889 (SAKDLAGQLT…ARISTCSEQS (228 aa)).

In terms of assembly, interacts with PDE3B and PIK3R6; form a signaling complex that regulates phosphatidylinositol 3-kinase gamma in angiogenesis. In terms of tissue distribution, widely expressed with highest levels in adult kidney, heart, thyroid and brain, and fetal kidney.

It is found in the endomembrane system. Guanine nucleotide exchange factor (GEF) for RAP1A and RAP2A small GTPases that is activated by binding cAMP. Through simultaneous binding of PDE3B to RAPGEF3 and PIK3R6 is assembled in a signaling complex in which it activates the PI3K gamma complex and which is involved in angiogenesis. Plays a role in the modulation of the cAMP-induced dynamic control of endothelial barrier function through a pathway that is independent on Rho-mediated signaling. Required for the actin rearrangement at cell-cell junctions, such as stress fibers and junctional actin. This is Rap guanine nucleotide exchange factor 3 (RAPGEF3) from Homo sapiens (Human).